The sequence spans 277 residues: 2-dehydro-3-deoxyphosphooctonate aldolase (277 aa).

It belongs to the KdsA family.

Its subcellular location is the cytoplasm. The enzyme catalyses D-arabinose 5-phosphate + phosphoenolpyruvate + H2O = 3-deoxy-alpha-D-manno-2-octulosonate-8-phosphate + phosphate. It participates in carbohydrate biosynthesis; 3-deoxy-D-manno-octulosonate biosynthesis; 3-deoxy-D-manno-octulosonate from D-ribulose 5-phosphate: step 2/3. Its pathway is bacterial outer membrane biogenesis; lipopolysaccharide biosynthesis. This is 2-dehydro-3-deoxyphosphooctonate aldolase from Vesicomyosocius okutanii subsp. Calyptogena okutanii (strain HA).